The following is a 236-amino-acid chain: Purine nucleoside phosphorylase DeoD-type 2 (236 aa).

H5 provides a ligand contact to a purine D-ribonucleoside. Phosphate-binding positions include G21, R25, R44, and 88-91; that span reads RVGS. Residues 180–182 and 204–205 each bind a purine D-ribonucleoside; these read DME and SD. The active-site Proton donor is the D205.

Belongs to the PNP/UDP phosphorylase family. As to quaternary structure, homohexamer; trimer of homodimers.

The enzyme catalyses a purine D-ribonucleoside + phosphate = a purine nucleobase + alpha-D-ribose 1-phosphate. The catalysed reaction is a purine 2'-deoxy-D-ribonucleoside + phosphate = a purine nucleobase + 2-deoxy-alpha-D-ribose 1-phosphate. Catalyzes the reversible phosphorolytic breakdown of the N-glycosidic bond in the beta-(deoxy)ribonucleoside molecules, with the formation of the corresponding free purine bases and pentose-1-phosphate. The polypeptide is Purine nucleoside phosphorylase DeoD-type 2 (Vibrio parahaemolyticus serotype O3:K6 (strain RIMD 2210633)).